A 506-amino-acid polypeptide reads, in one-letter code: Pleckstrin homology domain-containing family D member 1 (506 aa).

Residues 28 to 136 (KVQLYGVLWK…WLEMLQESGK (109 aa)) form the PH domain. Residues 146 to 391 (EAMIKSLEAQ…KVRNKEKEER (246 aa)) adopt a coiled-coil conformation. The residue at position 503 (Arg503) is an Omega-N-methylarginine.

This sequence belongs to the PLEKHD1 family.

The sequence is that of Pleckstrin homology domain-containing family D member 1 (PLEKHD1) from Homo sapiens (Human).